A 194-amino-acid polypeptide reads, in one-letter code: Phosphoheptose isomerase (194 aa).

In terms of domain architecture, SIS spans 37-194; the sequence is ISNSFKQGGK…LIEFEMAKQA (158 aa). Substrate is bound at residue 52-54; sequence NGG. Residues histidine 61 and glutamate 65 each coordinate Zn(2+). Substrate is bound by residues glutamate 65, 93 to 94, 119 to 121, serine 124, and glutamine 172; these read ND and STS. The Zn(2+) site is built by glutamine 172 and histidine 180.

This sequence belongs to the SIS family. GmhA subfamily. As to quaternary structure, homotetramer. Zn(2+) is required as a cofactor.

The protein localises to the cytoplasm. The catalysed reaction is 2 D-sedoheptulose 7-phosphate = D-glycero-alpha-D-manno-heptose 7-phosphate + D-glycero-beta-D-manno-heptose 7-phosphate. It participates in carbohydrate biosynthesis; D-glycero-D-manno-heptose 7-phosphate biosynthesis; D-glycero-alpha-D-manno-heptose 7-phosphate and D-glycero-beta-D-manno-heptose 7-phosphate from sedoheptulose 7-phosphate: step 1/1. In terms of biological role, catalyzes the isomerization of sedoheptulose 7-phosphate in D-glycero-D-manno-heptose 7-phosphate. This Haemophilus influenzae (strain PittGG) protein is Phosphoheptose isomerase.